A 328-amino-acid polypeptide reads, in one-letter code: Probable fused nickel transport protein LarMN (328 aa).

8 helical membrane-spanning segments follow: residues 8 to 28, 42 to 62, 75 to 95, 103 to 123, 138 to 158, 187 to 207, 229 to 249, and 296 to 316; these read LSPA…TVAV, LPML…NLPI, LLAV…TLLL, GGIL…PFVG, LGLA…AGIE, MLTA…LLVF, PWIA…LASN, and PVSV…LLLI.

It belongs to the CbiM family. NikM subfamily. As to quaternary structure, may form an energy-coupling factor (ECF) transporter complex composed of an ATP-binding protein (A component, LarO), a transmembrane protein (T component, LarQ) and a fused possible substrate-capture protein (S component, LarMN) of unknown stoichiometry.

Its subcellular location is the cell membrane. In terms of biological role, probably part of the energy-coupling factor (ECF) transporter complex LarMNQO involved in nickel import. The protein is Probable fused nickel transport protein LarMN of Lactiplantibacillus plantarum (strain ATCC BAA-793 / NCIMB 8826 / WCFS1) (Lactobacillus plantarum).